Consider the following 258-residue polypeptide: MSNLNVERVLSVHHWNDTLFSFKTTRNPSLRFENGQFVMIGLEVDGRPLMRAYSIASPNYEEHLEFFSIKVQNGPLTSRLQHLKEGDELMVSRKPTGTLVTSDLLPGKHLYMLSTGTGLAPFMSLIQDPEVYERFEKVVLIHGVRQVNELAYQQFITEHLPQSEYFGEAVKEKLIYYPTVTRESFHNQGRLTDLMRSGKLFEDIGLPPINPQDDRAMICGSPSMLDESCEVLDGFGLKISPRMGEPGDYLIERAFVEK.

Positions 2-102 constitute an FAD-binding FR-type domain; sequence SNLNVERVLS…RKPTGTLVTS (101 aa). Position 17 (D17) interacts with NADP(+). FAD is bound by residues 51-54, 67-69, 74-77, and T117; these read RAYS, FSI, and GPLT. NADP(+) contacts are provided by residues 144–145, 181–182, and R190; these read VR and TR. An FAD-binding site is contributed by 254 to 258; that stretch reads AFVEK.

Belongs to the ferredoxin--NADP reductase type 1 family. Monomer. It depends on FAD as a cofactor.

It catalyses the reaction 2 reduced [2Fe-2S]-[ferredoxin] + NADP(+) + H(+) = 2 oxidized [2Fe-2S]-[ferredoxin] + NADPH. In terms of biological role, transports electrons between ferredoxin and NADPH. In Azotobacter vinelandii, this protein is Ferredoxin--NADP reductase.